We begin with the raw amino-acid sequence, 97 residues long: Large ribosomal subunit protein uL23 (97 aa).

The protein belongs to the universal ribosomal protein uL23 family. In terms of assembly, part of the 50S ribosomal subunit. Contacts protein L29, and trigger factor when it is bound to the ribosome.

In terms of biological role, one of the early assembly proteins it binds 23S rRNA. One of the proteins that surrounds the polypeptide exit tunnel on the outside of the ribosome. Forms the main docking site for trigger factor binding to the ribosome. In Brucella suis (strain ATCC 23445 / NCTC 10510), this protein is Large ribosomal subunit protein uL23.